The primary structure comprises 184 residues: Peptidyl-tRNA hydrolase (184 aa).

Tyrosine 13 provides a ligand contact to tRNA. Histidine 18 functions as the Proton acceptor in the catalytic mechanism. 3 residues coordinate tRNA: phenylalanine 59, asparagine 61, and asparagine 105.

Belongs to the PTH family. As to quaternary structure, monomer.

The protein resides in the cytoplasm. The catalysed reaction is an N-acyl-L-alpha-aminoacyl-tRNA + H2O = an N-acyl-L-amino acid + a tRNA + H(+). In terms of biological role, hydrolyzes ribosome-free peptidyl-tRNAs (with 1 or more amino acids incorporated), which drop off the ribosome during protein synthesis, or as a result of ribosome stalling. Catalyzes the release of premature peptidyl moieties from peptidyl-tRNA molecules trapped in stalled 50S ribosomal subunits, and thus maintains levels of free tRNAs and 50S ribosomes. The polypeptide is Peptidyl-tRNA hydrolase (Sulfurimonas denitrificans (strain ATCC 33889 / DSM 1251) (Thiomicrospira denitrificans (strain ATCC 33889 / DSM 1251))).